We begin with the raw amino-acid sequence, 552 residues long: Putative transport protein PBPRA2144 (552 aa).

The next 5 helical transmembrane spans lie at 4 to 24 (IALSISILALVAVLGLWIGNW), 26 to 46 (ICGVGLGIGGVLFGGIFVGHF), 65 to 85 (FGLILFVYTIGIQVGPGFFAS), 95 to 115 (AFAALVVLLGCIVAIGLYKIF), and 158 to 178 (MGYAVAYPFGICGILLTMWIL). RCK C-terminal domains follow at residues 188–276 (KEAE…VIGE) and 279–361 (DASL…IVGN). A run of 6 helical transmembrane segments spans residues 371–391 (MLPVFVGIGLGVLLGSIPFYL), 394–414 (FPAAIKLGLAGGPLLVALILA), 439–459 (IVLFLAVVGLKSGGGFVDTLV), 464–484 (LSWMGYGIVITLVPLLTVGFL), 493–513 (YLTICGMLAGSMTDPPALAFA), and 532–552 (PLVMCLRILSPQILALLLWAV).

Belongs to the AAE transporter (TC 2.A.81) family. YidE subfamily.

It localises to the cell membrane. The chain is Putative transport protein PBPRA2144 from Photobacterium profundum (strain SS9).